We begin with the raw amino-acid sequence, 223 residues long: Putative C-type lectin protein 51 (223 aa).

The N-terminal stretch at 1-31 (MAKRINFTSCLIFTSCFTAFIVSLCLLVSSC) is a signal peptide. Residues 111 to 218 (QEGRCYHYSR…CDTPRRCLCG (108 aa)) form the C-type lectin domain. The cysteines at positions 193 and 209 are disulfide-linked.

This is Putative C-type lectin protein 51 (51) from Equine herpesvirus 2 (strain 86/87) (EHV-2).